The primary structure comprises 166 residues: Protein-export protein SecB (166 aa).

It belongs to the SecB family. In terms of assembly, homotetramer, a dimer of dimers. One homotetramer interacts with 1 SecA dimer.

The protein localises to the cytoplasm. Its function is as follows. One of the proteins required for the normal export of preproteins out of the cell cytoplasm. It is a molecular chaperone that binds to a subset of precursor proteins, maintaining them in a translocation-competent state. It also specifically binds to its receptor SecA. The polypeptide is Protein-export protein SecB (Actinobacillus pleuropneumoniae serotype 7 (strain AP76)).